The primary structure comprises 908 residues: Magnesium-transporting ATPase, P-type 1 (908 aa).

The span at 1-20 shows a compositional bias: basic and acidic residues; it reads MTDMNIENRKLNRPASENDK. Positions 1 to 21 are disordered; that stretch reads MTDMNIENRKLNRPASENDKQ. Topologically, residues 1–80 are cytoplasmic; the sequence is MTDMNIENRK…QVPPALIQLL (80 aa). The chain crosses the membrane as a helical span at residues 81–101; it reads QAFNNPFIYVLMALAGVSFIT. The Extracellular segment spans residues 102–113; it reads DYWLPLRRGEET. The chain crosses the membrane as a helical span at residues 114 to 134; sequence DLTGVLIILTMVSLSGLLRFW. Topologically, residues 135–293 are cytoplasmic; sequence QEFRTNRAAQ…QTAFDRGVNS (159 aa). A helical membrane pass occupies residues 294-314; sequence VSWLLIRFMLIMVPVVLLING. Topologically, residues 315 to 323 are extracellular; that stretch reads FSKGDWVEA. The helical transmembrane segment at 324–341 threads the bilayer; that stretch reads SLFALAVAVGLTPEMLPM. E337 contributes to the Mg(2+) binding site. Residues 342–704 are Cytoplasmic-facing; it reads IVSSNLAKGA…IKGRETFGNI (363 aa). D379 serves as the catalytic 4-aspartylphosphate intermediate. Positions 650, 654, and 718 each coordinate Mg(2+). The chain crosses the membrane as a helical span at residues 705–724; the sequence is IKYLNMTASSNFGNVFSVLV. Topologically, residues 725 to 733 are extracellular; the sequence is ASAFIPFLP. Residues 734 to 753 form a helical membrane-spanning segment; the sequence is MLAIHLLIQNLMYDISQLSL. Mg(2+) contacts are provided by N743 and D747. At 754–775 the chain is on the cytoplasmic side; it reads PWDKMDKEFLRKPRKWDAKNIG. A helical membrane pass occupies residues 776–799; that stretch reads RFMLWIGPTSSIFDITTFALMWYV. Over 800 to 808 the chain is Extracellular; sequence FAANNVEAQ. The chain crosses the membrane as a helical span at residues 809–827; sequence ALFQSGWFIEGLLSQTLVV. Topologically, residues 828–840 are cytoplasmic; it reads HMLRTQKIPFIQS. The helical transmembrane segment at 841–860 threads the bilayer; that stretch reads RATLPVLLTTGLIMAIGIYI. Topologically, residues 861–875 are extracellular; sequence PFSPLGAMVGLEPLP. Residues 876–895 form a helical membrane-spanning segment; sequence LSYFPWLVATLLSYCLVAQG. At 896–908 the chain is on the cytoplasmic side; it reads MKRFYIKRFGQWF.

It belongs to the cation transport ATPase (P-type) (TC 3.A.3) family. Type IIIB subfamily.

The protein resides in the cell inner membrane. It catalyses the reaction Mg(2+)(out) + ATP + H2O = Mg(2+)(in) + ADP + phosphate + H(+). Its function is as follows. Mediates magnesium influx to the cytosol. The chain is Magnesium-transporting ATPase, P-type 1 (mgtB) from Salmonella typhimurium (strain LT2 / SGSC1412 / ATCC 700720).